Here is a 438-residue protein sequence, read N- to C-terminus: 26S proteasome regulatory subunit 6A (438 aa).

The disordered stretch occupies residues 1 to 24 (MSTLEELDALDQSQQGGSSNNEGL). Over residues 11-22 (DQSQQGGSSNNE) the composition is skewed to polar residues. 226 to 233 (GPPGTGKT) is a binding site for ATP.

Belongs to the AAA ATPase family.

It localises to the cytoplasm. The protein localises to the nucleus. Functionally, the 26S proteasome is involved in the ATP-dependent degradation of ubiquitinated proteins. The regulatory (or ATPase) complex confers ATP dependency and substrate specificity to the 26S complex. This Schizosaccharomyces pombe (strain 972 / ATCC 24843) (Fission yeast) protein is 26S proteasome regulatory subunit 6A (tbp1).